A 1221-amino-acid polypeptide reads, in one-letter code: Fibulin-2 (1221 aa).

Positions 1 to 26 (MLLQESAGVWLALALVTALTPSPSMA) are cleaved as a signal peptide. A subdomain NA (Cys-rich) region spans residues 27–176 (VPWQDCTGAE…ELICYQLPGC (150 aa)). The segment at 27 to 434 (VPWQDCTGAE…DGSTKDLIET (408 aa)) is n. A subdomain NB (Cys-free) region spans residues 177–434 (HGNFSDAEEG…DGSTKDLIET (258 aa)). N-linked (GlcNAc...) asparagine glycosylation occurs at Asn-179. Disordered regions lie at residues 248–329 (PTAA…LIPD) and 341–399 (GAAP…PQHP). Residues 270 to 283 (DTEEDEEEEEEETL) are compositionally biased toward acidic residues. A compositionally biased stretch (basic and acidic residues) spans 312-322 (QEKEAEAKAGP). The Cell attachment site motif lies at 421–423 (RGD). Cystine bridges form between Cys-435–Cys-462, Cys-436–Cys-469, Cys-449–Cys-470, Cys-479–Cys-508, Cys-492–Cys-509, Cys-511–Cys-535, Cys-512–Cys-542, Cys-525–Cys-543, Cys-598–Cys-610, Cys-606–Cys-619, and Cys-621–Cys-634. 3 Anaphylatoxin-like domains span residues 435 to 477 (CCAA…LKEK), 478 to 510 (SCVAGVMGAKEGETCGAEDNDTCGVSLYKQCCD), and 511 to 543 (CCGLGLRVRAEGQSCESNPNLGYPCNHVMLSCC). N-linked (GlcNAc...) asparagine glycosylation occurs at Asn-497. The EGF-like 1; calcium-binding domain occupies 594–635 (DQDECLMLPGELCQHLCINTVGSYRCACFPGFELQGDGRTCR). Residues 633–661 (TCRPDRGAPQLDTARESAPRSESAQVSPN) form a disordered region. The segment covering 652–661 (RSESAQVSPN) has biased composition (polar residues). In terms of domain architecture, EGF-like 2 spans 669 to 708 (QPNTCKDNGPCRQVCRVVGDTAMCSCFPGYAIMADGVSCE). Intrachain disulfides connect Cys-673–Cys-683, Cys-679–Cys-692, Cys-694–Cys-707, Cys-713–Cys-726, and Cys-720–Cys-735. In terms of domain architecture, EGF-like 3; calcium-binding spans 709–755 (DQDECLMGTHDCSWKQFCVNTLGSFYCVNHTVLCAEGYILNAHRKCV). N-linked (GlcNAc...) asparagine glycosylation is present at Asn-737. Cys-742 and Cys-754 form a disulfide bridge. Positions 756–800 (DINECVTDLHTCTRAEHCVNTPGSFQCYKALTCEPGYVLTDGECT) constitute an EGF-like 4; calcium-binding domain. Positions 801–846 (DVDECVTGTHNCQAGFSCQNTKGSFYCQARQRCMDGFLQDPEGNCV) constitute an EGF-like 5; calcium-binding domain. 3 disulfides stabilise this stretch: Cys-805–Cys-818, Cys-812–Cys-827, and Cys-833–Cys-845. In terms of domain architecture, EGF-like 6; calcium-binding spans 847–894 (DINECTSLLEPCRSGFSCINTVGSYTCQRNPLVCGRGYHANEEGSECV). In terms of domain architecture, EGF-like 7; calcium-binding spans 895–937 (DVNECETGVHRCGEGQLCYNLPGSYRCDCKPGFQRDAFGRTCI). Intrachain disulfides connect Cys-899/Cys-912, Cys-906/Cys-921, Cys-923/Cys-936, Cys-942/Cys-954, Cys-950/Cys-963, Cys-965/Cys-978, Cys-984/Cys-993, Cys-989/Cys-1002, Cys-1004/Cys-1017, Cys-1023/Cys-1035, Cys-1031/Cys-1044, Cys-1046/Cys-1060, Cys-1066/Cys-1079, Cys-1073/Cys-1088, and Cys-1093/Cys-1105. An EGF-like 8; calcium-binding domain is found at 938–979 (DVNECWVSPGRLCQHTCENTPGSYRCSCAAGFLLAADGKHCE). One can recognise an EGF-like 9; calcium-binding domain in the interval 980–1018 (DVNECETRRCSQECANIYGSYQCYCRQGYQLAEDGHTCT). The region spanning 1019-1061 (DIDECAQGAGILCTFRCVNVPGSYQCACPEQGYTMMANGRSCK) is the EGF-like 10; calcium-binding domain. Residues 1062 to 1106 (DLDECALGTHNCSEAETCHNIQGSFRCLRFDCPPNYVRVSETKCE) form the EGF-like 11; calcium-binding domain. Asn-1072 carries N-linked (GlcNAc...) asparagine glycosylation. The domain III stretch occupies residues 1111 to 1221 (QDITECQTSP…MYIFFTTFAP (111 aa)).

Belongs to the fibulin family. In terms of assembly, homotrimer; disulfide-linked. Interacts with LAMA2. Interacts with FBN1 (via N-terminal domain). Forms a ternary complex with ELN and FBN1. In terms of tissue distribution, component of both basement membranes and other connective tissues.

The protein localises to the secreted. The protein resides in the extracellular space. It localises to the extracellular matrix. Its binding to fibronectin and some other ligands is calcium dependent. May act as an adapter that mediates the interaction between FBN1 and ELN. The chain is Fibulin-2 (Fbln2) from Mus musculus (Mouse).